A 217-amino-acid chain; its full sequence is uncharacterized protein (217 aa).

The region spanning 98 to 203 (QRRQYVRTDA…GDQQALLQYC (106 aa)) is the PilZ domain.

This is an uncharacterized protein from Bacillus subtilis (strain 168).